The following is a 402-amino-acid chain: MAT+ sexual cell fertilization-promoting factor (402 aa).

A DNA-binding region (HMG box) is located at residues 169-237 (IPRPPNAYIL…KLMSAHPHYR (69 aa)). Residues 246 to 272 (IRRRAPRRNRAQEVANASPIGENSGAP) form a disordered region.

It localises to the nucleus. Functionally, controls fertilization, probably by determining the mating type. In Podospora anserina (Pleurage anserina), this protein is MAT+ sexual cell fertilization-promoting factor (FPR1).